The primary structure comprises 177 residues: RNA polymerase sigma-E factor (177 aa).

Residues Asp-34–Trp-47 carry the Polymerase core binding motif. A DNA-binding region (H-T-H motif) is located at residues Thr-128–His-147.

Belongs to the sigma-70 factor family. ECF subfamily.

Its subcellular location is the cytoplasm. In terms of biological role, sigma factors are initiation factors that promote the attachment of RNA polymerase to specific initiation sites and are then released. This sigma factor is required for normal cell wall integrity; it is recruited by RNA polymerase to transcribe genes with cell wall-related functions. It is also involved in the transcription of the dagA gene coding for an extracellular agar-degrading enzyme. The chain is RNA polymerase sigma-E factor (sigE) from Streptomyces coelicolor (strain ATCC BAA-471 / A3(2) / M145).